The sequence spans 291 residues: 4-hydroxy-tetrahydrodipicolinate synthase (291 aa).

Residue Thr44 coordinates pyruvate. Tyr132 functions as the Proton donor/acceptor in the catalytic mechanism. Lys160 (schiff-base intermediate with substrate) is an active-site residue. A pyruvate-binding site is contributed by Val202.

The protein belongs to the DapA family. Homotetramer; dimer of dimers.

The protein localises to the cytoplasm. The enzyme catalyses L-aspartate 4-semialdehyde + pyruvate = (2S,4S)-4-hydroxy-2,3,4,5-tetrahydrodipicolinate + H2O + H(+). It participates in amino-acid biosynthesis; L-lysine biosynthesis via DAP pathway; (S)-tetrahydrodipicolinate from L-aspartate: step 3/4. Functionally, catalyzes the condensation of (S)-aspartate-beta-semialdehyde [(S)-ASA] and pyruvate to 4-hydroxy-tetrahydrodipicolinate (HTPA). In Clostridium perfringens (strain SM101 / Type A), this protein is 4-hydroxy-tetrahydrodipicolinate synthase.